The primary structure comprises 354 residues: Pyrimidine monooxygenase RutA (354 aa).

Residues 49–50 (IK), N115, E124, 140–141 (RY), and S189 contribute to the FMN site.

Belongs to the NtaA/SnaA/DszA monooxygenase family. RutA subfamily.

The enzyme catalyses uracil + FMNH2 + NADH + O2 = (Z)-3-ureidoacrylate + FMN + NAD(+) + H2O + H(+). It catalyses the reaction thymine + FMNH2 + NADH + O2 = (Z)-2-methylureidoacrylate + FMN + NAD(+) + H2O + H(+). Catalyzes the pyrimidine ring opening between N-3 and C-4 by an unusual flavin hydroperoxide-catalyzed mechanism, adding oxygen atoms in the process to yield ureidoacrylate peracid, that immediately reacts with FMN forming ureidoacrylate and FMN-N(5)-oxide. The FMN-N(5)-oxide reacts spontaneously with NADH to produce FMN. Requires the flavin reductase RutF to regenerate FMN in vivo. The protein is Pyrimidine monooxygenase RutA of Caulobacter sp. (strain K31).